The chain runs to 364 residues: Anthranilate phosphoribosyltransferase (364 aa).

5-phospho-alpha-D-ribose 1-diphosphate is bound by residues glycine 101, 104-105 (GD), threonine 109, 111-114 (NLST), 129-137 (KHGNRAASS), and glycine 141. Glycine 101 is an anthranilate binding site. Serine 113 is a binding site for Mg(2+). Position 132 (asparagine 132) interacts with anthranilate. Arginine 187 serves as a coordination point for anthranilate. 2 residues coordinate Mg(2+): aspartate 245 and glutamate 246.

The protein belongs to the anthranilate phosphoribosyltransferase family. In terms of assembly, homodimer. Requires Mg(2+) as cofactor.

It carries out the reaction N-(5-phospho-beta-D-ribosyl)anthranilate + diphosphate = 5-phospho-alpha-D-ribose 1-diphosphate + anthranilate. It participates in amino-acid biosynthesis; L-tryptophan biosynthesis; L-tryptophan from chorismate: step 2/5. Functionally, catalyzes the transfer of the phosphoribosyl group of 5-phosphorylribose-1-pyrophosphate (PRPP) to anthranilate to yield N-(5'-phosphoribosyl)-anthranilate (PRA). The chain is Anthranilate phosphoribosyltransferase from Mycolicibacterium gilvum (strain PYR-GCK) (Mycobacterium gilvum (strain PYR-GCK)).